A 221-amino-acid chain; its full sequence is Glutathione S-transferase U25 (221 aa).

Ala2 is modified (N-acetylalanine). One can recognise a GST N-terminal domain in the interval 3–82 (DEVILLDFWP…YIDEVWPSKT (80 aa)). Glutathione-binding positions include 13–14 (SM), 39–40 (NK), 53–54 (KI), and 66–67 (ES). The 121-residue stretch at 88–208 (DPYQRAQAKF…LPDSEKIIKF (121 aa)) folds into the GST C-terminal domain. Thr149 carries the post-translational modification Phosphothreonine.

It belongs to the GST superfamily. Tau family.

The protein localises to the cytoplasm. It is found in the cytosol. The catalysed reaction is RX + glutathione = an S-substituted glutathione + a halide anion + H(+). May be involved in the conjugation of reduced glutathione to a wide number of exogenous and endogenous hydrophobic electrophiles and have a detoxification role against certain herbicides. This is Glutathione S-transferase U25 (GSTU25) from Arabidopsis thaliana (Mouse-ear cress).